The sequence spans 532 residues: Cytochrome P450 monooxygenase pgmC (532 aa).

Residues Ile15–Leu32 traverse the membrane as a helical segment. Residue Cys438 coordinates heme.

Belongs to the cytochrome P450 family. It depends on heme as a cofactor.

It is found in the membrane. It functions in the pathway pigment biosynthesis. Its pathway is secondary metabolite biosynthesis. Functionally, cytochrome P450 monooxygenase; part of the gene cluster that mediates the biosynthesis of pleosporalin A, ascomycone A, as well as a third cryptic naphthoquinone derived pigment, all responsible for the coloration of conidia. Involved in the oxidation of fusarubinaldehyde at C-9. PgmC has low substrate-specificity and is also able to use the pgmA product 3-acetonyl-1,6,8-trihydroxy-2-naphthaldehyde as a substrate. The pathway begins with the biosynthesis of the cyclized heptaketide 3-acetonyl-1,6,8-trihydroxy-2-naphthaldehyde by the NR-PKS pgmA. The C-6 hydroxyl group is further methylated by the O-methyltransferase pgmB to yield fusarubinaldehyde which is in turn oxidized by the cytochrome P450 monooxygenase pgmC at C-9. The C-1 hydroxyl group is then methylated spontaneously. Although pgmE, pgmD and pgmH are essential for the production of pleosporalin A, it is not the case for the 2 other final products and it remains difficult to assign a specific function to each enzyme. PgmF and pgmG seem not to be involved in pigment biosynthesis although they were regulated by the cluster-specific transcription factor pgmR. In Aspergillus terreus (strain NIH 2624 / FGSC A1156), this protein is Cytochrome P450 monooxygenase pgmC.